The primary structure comprises 941 residues: Replicative DNA helicase DnaB (941 aa).

The tract at residues 1–25 is disordered; sequence MAEFEERPRLSIGEEEAPPYPLEKL. The 271-residue stretch at 214-484 folds into the SF4 helicase; first part domain; sequence RPGGITGVPS…PVYRLTTRLG (271 aa). Residue 245–252 coordinates ATP; the sequence is ARPSMGKT. Residues 534-683 form the DOD-type homing endonuclease domain; that stretch reads LLGHLIGDGC…VQSLLLRLGI (150 aa). Residues 646–915 form the SF4 helicase; second part domain; sequence DGCIQMRRGK…ARFENLTMYQ (270 aa). The segment at 914-941 is disordered; that stretch reads YQPEPGTPLPETPDETILPSGPPDEAPF.

Belongs to the helicase family. DnaB subfamily. In terms of assembly, homohexamer. Upon expression in E.coli this protein undergoes self splicing that involves a post-translational excision of the intervening region (intein) followed by peptide ligation.

The enzyme catalyses Couples ATP hydrolysis with the unwinding of duplex DNA at the replication fork by translocating in the 5'-3' direction. This creates two antiparallel DNA single strands (ssDNA). The leading ssDNA polymer is the template for DNA polymerase III holoenzyme which synthesizes a continuous strand.. The catalysed reaction is ATP + H2O = ADP + phosphate + H(+). The main replicative DNA helicase, it participates in initiation and elongation during chromosome replication. Travels ahead of the DNA replisome, separating dsDNA into templates for DNA synthesis. A processive ATP-dependent 5'-3' DNA helicase it has DNA-dependent ATPase activity. Its function is as follows. The intein is an endonuclease. This chain is Replicative DNA helicase DnaB, found in Rhodothermus marinus (Rhodothermus obamensis).